Here is a 157-residue protein sequence, read N- to C-terminus: Iron-sulfur cluster repair protein DnrN (157 aa).

Belongs to the RIC family.

The protein localises to the cytoplasm. In terms of biological role, di-iron-containing protein involved in the repair of iron-sulfur clusters damaged by oxidative and nitrosative stress conditions. Required to repair damage caused by nitric oxide to FNR and NsrR transcription factors. The chain is Iron-sulfur cluster repair protein DnrN (dnrN) from Neisseria gonorrhoeae.